The chain runs to 228 residues: MNACERLSRVLERIQKACERAGRGENCAKLLGASKTVPPEVIREFYNCGLKVYGENRVQEFLKKYEALKDLDLEWHFIGRLQTNKVKYLMGKVVLIHSLDRKNLADEIQKRAFKNNIVQDVLIEVNVGGEETKGGVEPENLKELFEYTLELPNVKVLGLMTIPPYLENPEDVRPYFRKLRELRDELQREYNVALPHLSMGMSHDFEVAIEEGATIVRIGTLLFGERKY.

An N6-(pyridoxal phosphate)lysine modification is found at Lys35.

It belongs to the pyridoxal phosphate-binding protein YggS/PROSC family.

Pyridoxal 5'-phosphate (PLP)-binding protein, which is involved in PLP homeostasis. This is Pyridoxal phosphate homeostasis protein from Aquifex aeolicus (strain VF5).